Consider the following 25-residue polypeptide: SPbeta prophage-derived uncharacterized protein YotF (25 aa).

The sequence is that of SPbeta prophage-derived uncharacterized protein YotF (yotF) from Bacillus subtilis (strain 168).